A 165-amino-acid chain; its full sequence is CDP-archaeol synthase (165 aa).

The next 3 membrane-spanning stretches (helical) occupy residues 4–24 (IVQL…AVLA), 78–98 (LLDA…GAFV), and 118–138 (FLLM…PLLL).

It belongs to the CDP-archaeol synthase family. Mg(2+) serves as cofactor.

The protein resides in the cell membrane. The catalysed reaction is 2,3-bis-O-(geranylgeranyl)-sn-glycerol 1-phosphate + CTP + H(+) = CDP-2,3-bis-O-(geranylgeranyl)-sn-glycerol + diphosphate. The protein operates within membrane lipid metabolism; glycerophospholipid metabolism. In terms of biological role, catalyzes the formation of CDP-2,3-bis-(O-geranylgeranyl)-sn-glycerol (CDP-archaeol) from 2,3-bis-(O-geranylgeranyl)-sn-glycerol 1-phosphate (DGGGP) and CTP. This reaction is the third ether-bond-formation step in the biosynthesis of archaeal membrane lipids. The chain is CDP-archaeol synthase from Pyrobaculum calidifontis (strain DSM 21063 / JCM 11548 / VA1).